The sequence spans 114 residues: Hemerythrin subunit 2 (114 aa).

Residues H26, H55, E59, H74, H78, H102, and D107 each contribute to the Fe cation site.

Belongs to the hemerythrin family.

Its function is as follows. Hemerythrin is a respiratory protein in blood cells of certain marine worms. The oxygen-binding site in each chain contains two iron atoms. This is Hemerythrin subunit 2 from Golfingia vulgaris (Marine worm).